The sequence spans 507 residues: Glycerol kinase 1 (507 aa).

Position 12 (Thr12) interacts with ADP. 3 residues coordinate ATP: Thr12, Thr13, and Ser14. Residue Thr12 participates in sn-glycerol 3-phosphate binding. Arg16 serves as a coordination point for ADP. The sn-glycerol 3-phosphate site is built by Arg82, Glu83, Tyr134, and Asp249. Arg82, Glu83, Tyr134, Asp249, and Gln250 together coordinate glycerol. 2 residues coordinate ADP: Thr271 and Gly315. Residues Thr271, Gly315, Gln319, and Gly416 each contribute to the ATP site. Residues Gly416 and Asn420 each coordinate ADP.

This sequence belongs to the FGGY kinase family.

The catalysed reaction is glycerol + ATP = sn-glycerol 3-phosphate + ADP + H(+). Its pathway is polyol metabolism; glycerol degradation via glycerol kinase pathway; sn-glycerol 3-phosphate from glycerol: step 1/1. With respect to regulation, inhibited by fructose 1,6-bisphosphate (FBP). Its function is as follows. Key enzyme in the regulation of glycerol uptake and metabolism. Catalyzes the phosphorylation of glycerol to yield sn-glycerol 3-phosphate. This Streptomyces coelicolor (strain ATCC BAA-471 / A3(2) / M145) protein is Glycerol kinase 1.